Here is a 359-residue protein sequence, read N- to C-terminus: Chondroadherin (359 aa).

An N-terminal signal peptide occupies residues methionine 1–alanine 22. The cysteines at positions 23 and 38 are disulfide-linked. Positions cysteine 23 to lysine 52 constitute an LRRNT domain. LRR repeat units follow at residues asparagine 76 to glycine 97, glutamine 100 to aspartate 121, glutamate 124 to proline 145, asparagine 148 to glycine 169, aspartate 172 to aspartate 193, asparagine 196 to lysine 217, valine 220 to serine 241, tyrosine 245 to glycine 266, and threonine 269 to aspartate 290. Serine 144 carries O-linked (GalNAc...) serine glycosylation. The LRRCT domain maps to asparagine 300–phenylalanine 348. 2 disulfide bridges follow: cysteine 304-cysteine 346 and cysteine 306-cysteine 326.

It belongs to the small leucine-rich proteoglycan (SLRP) family. SLRP class IV subfamily. As to quaternary structure, mostly monomeric. Interacts with collagen type II. As to expression, present in chondrocytes at all ages.

The protein resides in the secreted. It localises to the extracellular space. It is found in the extracellular matrix. Its function is as follows. Promotes attachment of chondrocytes, fibroblasts, and osteoblasts. This binding is mediated (at least for chondrocytes and fibroblasts) by the integrin alpha(2)beta(1). May play an important role in the regulation of chondrocyte growth and proliferation. The polypeptide is Chondroadherin (CHAD) (Homo sapiens (Human)).